We begin with the raw amino-acid sequence, 504 residues long: Probable cytosol aminopeptidase (504 aa).

2 residues coordinate Mn(2+): K263 and D268. K275 is an active-site residue. The Mn(2+) site is built by D286, D345, and E347. Residue R349 is part of the active site.

Belongs to the peptidase M17 family. Mn(2+) is required as a cofactor.

It is found in the cytoplasm. The catalysed reaction is Release of an N-terminal amino acid, Xaa-|-Yaa-, in which Xaa is preferably Leu, but may be other amino acids including Pro although not Arg or Lys, and Yaa may be Pro. Amino acid amides and methyl esters are also readily hydrolyzed, but rates on arylamides are exceedingly low.. The enzyme catalyses Release of an N-terminal amino acid, preferentially leucine, but not glutamic or aspartic acids.. Its function is as follows. Presumably involved in the processing and regular turnover of intracellular proteins. Catalyzes the removal of unsubstituted N-terminal amino acids from various peptides. The polypeptide is Probable cytosol aminopeptidase (Sulfurihydrogenibium sp. (strain YO3AOP1)).